The primary structure comprises 149 residues: Azurin (149 aa).

The first 20 residues, 1 to 20, serve as a signal peptide directing secretion; the sequence is MLAKATLAIVLSAASLPVLA. Positions 21–149 constitute a Plastocyanin-like domain; the sequence is AQCEATIESN…MMKGTLKLSN (129 aa). An intrachain disulfide couples Cys23 to Cys46. Cu cation-binding residues include His66, Cys132, His137, and Met141.

The protein localises to the periplasm. Transfers electrons from cytochrome c551 to cytochrome oxidase. This is Azurin (azu) from Achromobacter denitrificans (Alcaligenes denitrificans).